The following is a 1503-amino-acid chain: DNA-directed RNA polymerase subunit beta' (1503 aa).

Zn(2+) is bound by residues C71, C73, C86, and C89. Residues D470, D472, and D474 each contribute to the Mg(2+) site. Residues C800, C874, C881, and C884 each contribute to the Zn(2+) site.

This sequence belongs to the RNA polymerase beta' chain family. The RNAP catalytic core consists of 2 alpha, 1 beta, 1 beta' and 1 omega subunit. When a sigma factor is associated with the core the holoenzyme is formed, which can initiate transcription. It depends on Mg(2+) as a cofactor. Zn(2+) serves as cofactor.

It carries out the reaction RNA(n) + a ribonucleoside 5'-triphosphate = RNA(n+1) + diphosphate. DNA-dependent RNA polymerase catalyzes the transcription of DNA into RNA using the four ribonucleoside triphosphates as substrates. This chain is DNA-directed RNA polymerase subunit beta', found in Sulfurimonas denitrificans (strain ATCC 33889 / DSM 1251) (Thiomicrospira denitrificans (strain ATCC 33889 / DSM 1251)).